The following is a 309-amino-acid chain: Olfactory receptor 8U9 (309 aa).

Residues Met1–Phe28 lie on the Extracellular side of the membrane. Asn5 is a glycosylation site (N-linked (GlcNAc...) asparagine). The chain crosses the membrane as a helical span at residues Val29–Ile49. At Arg50–Asn56 the chain is on the cytoplasmic side. The chain crosses the membrane as a helical span at residues Thr57–Ile77. The Extracellular portion of the chain corresponds to Thr78–Cys97. Cys97 and Cys179 are disulfide-bonded. Residues Ala98–Met118 form a helical membrane-spanning segment. The Cytoplasmic segment spans residues Ala119–Gln143. The helical transmembrane segment at Leu144–Phe164 threads the bilayer. The Extracellular segment spans residues Arg165–Gly204. A helical transmembrane segment spans residues Ile205–Ile225. Residues Leu226–Ser239 are Cytoplasmic-facing. A helical transmembrane segment spans residues Thr240 to Leu260. Topologically, residues Gln261–Lys272 are extracellular. A helical transmembrane segment spans residues Met273–Gln293. The Cytoplasmic portion of the chain corresponds to Asn294–Asn309.

Belongs to the G-protein coupled receptor 1 family.

Its subcellular location is the cell membrane. In terms of biological role, odorant receptor. This is Olfactory receptor 8U9 (OR8U9) from Homo sapiens (Human).